The chain runs to 195 residues: Imidazoleglycerol-phosphate dehydratase (195 aa).

Belongs to the imidazoleglycerol-phosphate dehydratase family.

The protein localises to the cytoplasm. The enzyme catalyses D-erythro-1-(imidazol-4-yl)glycerol 3-phosphate = 3-(imidazol-4-yl)-2-oxopropyl phosphate + H2O. Its pathway is amino-acid biosynthesis; L-histidine biosynthesis; L-histidine from 5-phospho-alpha-D-ribose 1-diphosphate: step 6/9. In Maridesulfovibrio salexigens (strain ATCC 14822 / DSM 2638 / NCIMB 8403 / VKM B-1763) (Desulfovibrio salexigens), this protein is Imidazoleglycerol-phosphate dehydratase.